Consider the following 367-residue polypeptide: Mitochondrial GTPase 1 (367 aa).

One can recognise a CP-type G domain in the interval 42-228; that stretch reads LKTFEKLLPQ…LIDTPGIGVP (187 aa). GTP is bound by residues 89–92, 160–165, and glycine 224; these read TRKD and NVGKST.

Belongs to the TRAFAC class YlqF/YawG GTPase family. MTG1 subfamily.

It localises to the mitochondrion inner membrane. In terms of biological role, mitochondrial GTPase involved in assembly of the large ribosomal subunit. Plays a role in expression of the mitochondrial translational machinery. In Saccharomyces cerevisiae (strain ATCC 204508 / S288c) (Baker's yeast), this protein is Mitochondrial GTPase 1 (MTG1).